The primary structure comprises 158 residues: Transcription elongation factor GreA (158 aa).

This sequence belongs to the GreA/GreB family.

Functionally, necessary for efficient RNA polymerase transcription elongation past template-encoded arresting sites. The arresting sites in DNA have the property of trapping a certain fraction of elongating RNA polymerases that pass through, resulting in locked ternary complexes. Cleavage of the nascent transcript by cleavage factors such as GreA or GreB allows the resumption of elongation from the new 3'terminus. GreA releases sequences of 2 to 3 nucleotides. This is Transcription elongation factor GreA from Baumannia cicadellinicola subsp. Homalodisca coagulata.